A 501-amino-acid polypeptide reads, in one-letter code: HMG-box protein STE11 (501 aa).

A compositionally biased stretch (polar residues) spans 142-153 (PVNMVGSLSGSP). 2 disordered regions span residues 142–205 (PVNM…KRPL) and 246–293 (YAEM…SLEQ). A compositionally biased stretch (low complexity) spans 192–204 (SRSGSSSSGIKRP). The HMG box DNA-binding region spans 201–265 (IKRPLNSFML…RHAKEYPDYK (65 aa)). Residues 246-263 (YAEMAQRERERHAKEYPD) show a composition bias toward basic and acidic residues.

Phosphorylated by MAPK2.

It is found in the nucleus. This Pneumocystis carinii protein is HMG-box protein STE11.